We begin with the raw amino-acid sequence, 393 residues long: GTP exchange factor for ARFs 1 (393 aa).

Residues 1-12 (MSSRYSERNGLS) are compositionally biased toward polar residues. The tract at residues 1–21 (MSSRYSERNGLSETEKMTLPK) is disordered. Residues 12 to 54 (SETEKMTLPKVRKRKAQLVDEIEALKNEVREVDEELDQVYYTH) adopt a coiled-coil conformation. Positions 53 to 239 (THPKSKEYHK…TEVYESVSVT (187 aa)) constitute an SEC7 domain. The PH domain occupies 261 to 377 (HAEREGWLFK…MRSWINAISR (117 aa)).

Functionally, promotes guanine-nucleotide exchange on ARF. Promotes the activation of ARF through replacement of GDP with GTP. Plays a role in cell shedding during embryogenesis, probably by promoting the endocytosis of cell adhesion molecules. This Caenorhabditis elegans protein is GTP exchange factor for ARFs 1 (grp-1).